We begin with the raw amino-acid sequence, 838 residues long: Transforming acidic coiled-coil-containing protein 3 (838 aa).

Serine 2 is subject to N-acetylserine. Residues serine 25, serine 39, and serine 71 each carry the phosphoserine modification. A disordered region spans residues 123-227; sequence EADTDLLGDA…HGAEEECKAE (105 aa). The span at 132 to 164 shows a compositional bias: low complexity; the sequence is ASPAFGSGSSSESGPGALADLDCSSSSQSPGSS. Residues serine 175 and serine 177 each carry the phosphoserine modification. Residues 204 to 227 are compositionally biased toward basic and acidic residues; it reads DPCRTESQHKAETPHGAEEECKAE. Residues serine 250, serine 317, and serine 402 each carry the phosphoserine modification. The tract at residues 311–527 is disordered; that stretch reads GRAMTLSPQE…LELKEESFRD (217 aa). The span at 403 to 412 shows a compositional bias: basic and acidic residues; sequence YHLDWDKMDD. Serine 434 bears the Phosphoserine mark. Over residues 492–503 the composition is skewed to polar residues; the sequence is NSASTSLPTSCP. The interval 522-577 is necessary but not sufficient for spindle localization; the sequence is EESFRDPAEVLGTGAEVDYLEQFGTSSFKESALRKQSLYLKFDPLLRDSPGRPVPV. A Phosphoserine; by AURKA modification is found at serine 558. The interval 569–594 is disordered; it reads DSPGRPVPVATETSSMHGANETPSGR. The span at 579–591 shows a compositional bias: polar residues; that stretch reads TETSSMHGANETP. The interval 594–838 is necessary but not sufficient for spindle localization; sequence RPREAKLVEF…DDLISKMEKI (245 aa). Residues 637-837 adopt a coiled-coil conformation; it reads LQYSQKDLDA…CDDLISKMEK (201 aa).

This sequence belongs to the TACC family. Interacts with microtubules. Interacts with CKAP5 independently of clathrin. Interacts with CKAP5 and clathrin forming the TACC3/ch-TOG/clathrin complex located at spindle inter-microtubules bridges; TACC3 (phosphorylated at Ser-558 by AURKA) and CLTC are proposed to form a composite microtubule interaction surface. Interacts with CCDC100/CEP120. The coiled coil C-terminal region interacts with AH receptor nuclear translocator protein (ARNT) and ARNT2. Interacts with GCN5L2 and PCAF.

The protein resides in the cytoplasm. The protein localises to the cytoskeleton. It is found in the microtubule organizing center. It localises to the centrosome. Its subcellular location is the spindle. The protein resides in the spindle pole. Functionally, plays a role in the microtubule-dependent coupling of the nucleus and the centrosome. Involved in the processes that regulate centrosome-mediated interkinetic nuclear migration (INM) of neural progenitors. Acts as a component of the TACC3/ch-TOG/clathrin complex proposed to contribute to stabilization of kinetochore fibers of the mitotic spindle by acting as inter-microtubule bridge. The TACC3/ch-TOG/clathrin complex is required for the maintenance of kinetochore fiber tension. May be involved in the control of cell growth and differentiation. May contribute to cancer. The polypeptide is Transforming acidic coiled-coil-containing protein 3 (TACC3) (Homo sapiens (Human)).